A 262-amino-acid polypeptide reads, in one-letter code: Glucosamine-6-phosphate deaminase (262 aa).

D63 acts as the Proton acceptor; for enolization step in catalysis. N129 serves as the catalytic For ring-opening step. The active-site Proton acceptor; for ring-opening step is the H131. E136 acts as the For ring-opening step in catalysis.

Belongs to the glucosamine/galactosamine-6-phosphate isomerase family. NagB subfamily.

The enzyme catalyses alpha-D-glucosamine 6-phosphate + H2O = beta-D-fructose 6-phosphate + NH4(+). Its pathway is amino-sugar metabolism; N-acetylneuraminate degradation; D-fructose 6-phosphate from N-acetylneuraminate: step 5/5. Catalyzes the reversible isomerization-deamination of glucosamine 6-phosphate (GlcN6P) to form fructose 6-phosphate (Fru6P) and ammonium ion. This Bacillus cereus (strain G9842) protein is Glucosamine-6-phosphate deaminase.